Here is a 307-residue protein sequence, read N- to C-terminus: uncharacterized protein (307 aa).

A helical transmembrane segment spans residues 12–34 (LLAFLLALIMIGSVFAYMLSGGS).

Its subcellular location is the membrane. This is an uncharacterized protein from Archaeoglobus fulgidus (strain ATCC 49558 / DSM 4304 / JCM 9628 / NBRC 100126 / VC-16).